Here is a 308-residue protein sequence, read N- to C-terminus: Low density lipoprotein receptor adapter protein 1 (308 aa).

Met1 carries the post-translational modification N-acetylmethionine. Ser14 is modified (phosphoserine). Residues 41-195 enclose the PID domain; it reads LLEGMVFSLK…QEGGDVPGTR (155 aa). Residues 179–201 are disordered; sequence EKREKANQEGGDVPGTRRDSTPS. Phosphoserine occurs at positions 198 and 201. The Clathrin box signature appears at 211 to 215; the sequence is LLDLE. An AP-2 complex binding region spans residues 248-275; sequence WELDDGLDEAFSRLAQSRTNPQVLDTGL. Residues 256 to 265 carry the [DE]-X(1,2)-F-X-X-[FL]-X-X-X-R motif motif; that stretch reads EAFSRLAQSR. Residues 288 to 308 form a disordered region; sequence PTDWDKPDSSGIDQDDDVFTF.

As to quaternary structure, interacts (via PID domain) with LDLR (via NPXY motif). Binds to soluble clathrin trimers. Interacts with AP2B1; the interaction mediates the association with the AP-2 complex. Interacts with VLDLR. Interacts with LRP2.

The protein resides in the cytoplasm. In terms of biological role, adapter protein (clathrin-associated sorting protein (CLASP)) required for efficient endocytosis of the LDL receptor (LDLR) in polarized cells such as hepatocytes and lymphocytes, but not in non-polarized cells (fibroblasts). May be required for LDL binding and internalization but not for receptor clustering in coated pits. May facilitate the endocytosis of LDLR and LDLR-LDL complexes from coated pits by stabilizing the interaction between the receptor and the structural components of the pits. May also be involved in the internalization of other LDLR family members. Binds to phosphoinositides, which regulate clathrin bud assembly at the cell surface. Required for trafficking of LRP2 to the endocytic recycling compartment which is necessary for LRP2 proteolysis, releasing a tail fragment which translocates to the nucleus and mediates transcriptional repression. The polypeptide is Low density lipoprotein receptor adapter protein 1 (Mus musculus (Mouse)).